The following is a 366-amino-acid chain: Beta sliding clamp (366 aa).

The i stretch occupies residues M1–E125. The segment at V126 to D253 is II. The tract at residues K254 to L366 is III.

The protein belongs to the beta sliding clamp family. Forms a ring-shaped head-to-tail homodimer around DNA which binds and tethers DNA polymerases and other proteins to the DNA. The DNA replisome complex has a single clamp-loading complex (3 tau and 1 each of delta, delta', psi and chi subunits) which binds 3 Pol III cores (1 core on the leading strand and 2 on the lagging strand) each with a beta sliding clamp dimer. Additional proteins in the replisome are other copies of gamma, psi and chi, Ssb, DNA helicase and RNA primase.

Its subcellular location is the cytoplasm. Functionally, confers DNA tethering and processivity to DNA polymerases and other proteins. Acts as a clamp, forming a ring around DNA (a reaction catalyzed by the clamp-loading complex) which diffuses in an ATP-independent manner freely and bidirectionally along dsDNA. Initially characterized for its ability to contact the catalytic subunit of DNA polymerase III (Pol III), a complex, multichain enzyme responsible for most of the replicative synthesis in bacteria; Pol III exhibits 3'-5' exonuclease proofreading activity. The beta chain is required for initiation of replication as well as for processivity of DNA replication. The sequence is that of Beta sliding clamp (dnaN) from Escherichia coli O157:H7.